Here is a 699-residue protein sequence, read N- to C-terminus: 4-alpha-glucanotransferase (699 aa).

The protein belongs to the disproportionating enzyme family.

Its subcellular location is the cytoplasm. The enzyme catalyses Transfers a segment of a (1-&gt;4)-alpha-D-glucan to a new position in an acceptor, which may be glucose or a (1-&gt;4)-alpha-D-glucan.. This Haemophilus influenzae (strain ATCC 51907 / DSM 11121 / KW20 / Rd) protein is 4-alpha-glucanotransferase (malQ).